Consider the following 317-residue polypeptide: UAP56-interacting factor (317 aa).

Position 1 is an N-acetylmethionine (M1). Residues 1–23 (MNRFGTRLVGATATTPPAPKARS) are disordered. Position 14 is a phosphothreonine (T14). Residue S23 is modified to Phosphoserine. The UAP56-binding motif signature appears at 26–44 (NLDKIDMSLDEIIKLNRKE). Residues S60 and S117 each carry the phosphoserine modification. K139 is covalently cross-linked (Glycyl lysine isopeptide (Lys-Gly) (interchain with G-Cter in SUMO1)). A Glycyl lysine isopeptide (Lys-Gly) (interchain with G-Cter in SUMO2) cross-link involves residue K260.

This sequence belongs to the UIF family. As to quaternary structure, interacts with DDX39B/UAP56 and NXF1; interaction with DDX39B/UAP56 and NXF1 are mutually exclusive. Interacts with SSRP1; required for its recruitment to mRNAs. Interacts with CHTOP.

It is found in the nucleus. It localises to the nucleoplasm. Its subcellular location is the nucleus speckle. Required for mRNA export from the nucleus to the cytoplasm. Acts as an adapter that uses the DDX39B/UAP56-NFX1 pathway to ensure efficient mRNA export and delivering to the nuclear pore. Associates with spliced and unspliced mRNAs simultaneously with ALYREF/THOC4. The protein is UAP56-interacting factor (Fyttd1) of Rattus norvegicus (Rat).